A 236-amino-acid chain; its full sequence is Phosphoribosylaminoimidazole-succinocarboxamide synthase (236 aa).

It belongs to the SAICAR synthetase family.

It catalyses the reaction 5-amino-1-(5-phospho-D-ribosyl)imidazole-4-carboxylate + L-aspartate + ATP = (2S)-2-[5-amino-1-(5-phospho-beta-D-ribosyl)imidazole-4-carboxamido]succinate + ADP + phosphate + 2 H(+). It participates in purine metabolism; IMP biosynthesis via de novo pathway; 5-amino-1-(5-phospho-D-ribosyl)imidazole-4-carboxamide from 5-amino-1-(5-phospho-D-ribosyl)imidazole-4-carboxylate: step 1/2. This Lactococcus lactis subsp. cremoris (Streptococcus cremoris) protein is Phosphoribosylaminoimidazole-succinocarboxamide synthase (purC).